The sequence spans 68 residues: Large ribosomal subunit protein bL31 (68 aa).

Zn(2+)-binding residues include Cys16, Cys18, Cys37, and Cys40.

It belongs to the bacterial ribosomal protein bL31 family. Type A subfamily. Part of the 50S ribosomal subunit. It depends on Zn(2+) as a cofactor.

Its function is as follows. Binds the 23S rRNA. In Acidithiobacillus ferrooxidans (strain ATCC 23270 / DSM 14882 / CIP 104768 / NCIMB 8455) (Ferrobacillus ferrooxidans (strain ATCC 23270)), this protein is Large ribosomal subunit protein bL31.